The chain runs to 144 residues: MIALIQRVSEAAVRVDGEVVGEIEQGLLVLLGVEKGDDEAKAKRLMERVTTYRVFGDEDDKMNLNVKQVEGKVLVVSQFTLPADTKKGTRAGFSRGAHPEDAERLYNYFSDQCESVLPTERGRFAADMKVSLVNDGPVTFWLQV.

A Gly-cisPro motif, important for rejection of L-amino acids motif is present at residues glycine 136–proline 137.

Belongs to the DTD family. In terms of assembly, homodimer.

It localises to the cytoplasm. It catalyses the reaction glycyl-tRNA(Ala) + H2O = tRNA(Ala) + glycine + H(+). It carries out the reaction a D-aminoacyl-tRNA + H2O = a tRNA + a D-alpha-amino acid + H(+). Its function is as follows. An aminoacyl-tRNA editing enzyme that deacylates mischarged D-aminoacyl-tRNAs. Also deacylates mischarged glycyl-tRNA(Ala), protecting cells against glycine mischarging by AlaRS. Acts via tRNA-based rather than protein-based catalysis; rejects L-amino acids rather than detecting D-amino acids in the active site. By recycling D-aminoacyl-tRNA to D-amino acids and free tRNA molecules, this enzyme counteracts the toxicity associated with the formation of D-aminoacyl-tRNA entities in vivo and helps enforce protein L-homochirality. The protein is D-aminoacyl-tRNA deacylase of Vibrio atlanticus (strain LGP32) (Vibrio splendidus (strain Mel32)).